Here is a 475-residue protein sequence, read N- to C-terminus: Transcription factor EB (475 aa).

Residues M1–I52 form a disordered region. An interaction with ACSS2 region spans residues M1–L166. The segment covering Q26 to Q43 has biased composition (low complexity). Residues S108, S113, S121, and S137 each carry the phosphoserine modification. The Nuclear export signal signature appears at G135–P152. Phosphoserine; by MTOR is present on S141. Residues E155–M164 are strong transcription activation domain. A Phosphothreonine modification is found at T182. S210 carries the phosphoserine; by MTOR modification. C211 is modified (S-(2,3-dicarboxypropyl)cysteine). The 54-residue stretch at Q234 to M287 folds into the bHLH domain. The Nuclear localization signal motif lies at R244 to R247. Residues L297 to L318 are leucine-zipper. Position 331 is a phosphoserine (S331). A disordered region spans residues S351–K429. Low complexity predominate over residues L380 to P389. Phosphoserine occurs at positions 422, 440, 465, 466, and 468. The segment covering A445–S468 has biased composition (low complexity). The interval A445 to L475 is disordered.

Belongs to the MiT/TFE family. Homodimer and heterodimer; with TFE3 or MITF. Interacts (when phosphorylated by MTOR) with YWHAZ; promoting retention in the cytosol. Interacts with Irgm1; promoting association between TFEB and PPP3CB and dephosphorylation. Interacts with small GTPases Rag (RagA/RRAGA, RagB/RRAGB, RagC/RRAGC and/or RagD/RRAGD); promoting its recruitment to lysosomal membrane in the presence of nutrients. Interacts with ACSS2. Phosphorylation at Ser-210 by MTOR via non-canonical mTORC1 pathway regulates its subcellular location and activity. When nutrients are present, phosphorylation by MTOR promotes association with 14-3-3/YWHA adapters and retention in the cytosol. Inhibition of mTORC1, starvation and lysosomal disruption, promotes dephosphorylation by calcineurin PPP3CB and translocation to the nucleus. Dephosphorylated by calcineurin PPP3CB in response to lysosomal Ca(2+) release. Irgm1 promotes dephosphorylation by calcineurin PPP3CB, resulting in TFEB nuclear translocation and stimulation of lysosomal biogenesis. Exported from the nucleus in a mTORC1-dependent manner in response to nutrient availability. In terms of processing, alkylated via a non-enzymatic covalent modification. Itaconate, an anti-inflammatory metabolite generated in response to lipopolysaccharide, alkylates Cys-211, preventing association with 14-3-3/YWHA adapters, thereby promoting nuclear translocation and activity. Post-translationally, sumoylated; does not affect dimerization with MITF. Widely expressed.

The protein resides in the nucleus. It is found in the cytoplasm. Its subcellular location is the cytosol. The protein localises to the lysosome membrane. Transcription factor that acts as a master regulator of lysosomal biogenesis, autophagy, lysosomal exocytosis, lipid catabolism, energy metabolism and immune response. Specifically recognizes and binds E-box sequences (5'-CANNTG-3'); efficient DNA-binding requires dimerization with itself or with another MiT/TFE family member such as TFE3 or MITF. Involved in the cellular response to amino acid availability by acting downstream of MTOR: in the presence of nutrients, TFEB phosphorylation by MTOR promotes its cytosolic retention and subsequent inactivation. Upon starvation or lysosomal stress, inhibition of MTOR induces TFEB dephosphorylation, resulting in nuclear localization and transcription factor activity. Specifically recognizes and binds the CLEAR-box sequence (5'-GTCACGTGAC-3') present in the regulatory region of many lysosomal genes, leading to activate their expression, thereby playing a central role in expression of lysosomal genes. Regulates lysosomal positioning in response to nutrient deprivation by promoting the expression of PIP4P1. Acts as a positive regulator of autophagy by promoting expression of genes involved in autophagy. In association with TFE3, activates the expression of CD40L in T-cells, thereby playing a role in T-cell-dependent antibody responses in activated CD4(+) T-cells and thymus-dependent humoral immunity. Specifically recognizes the gamma-E3 box, a subset of E-boxes, present in the heavy-chain immunoglobulin enhancer. Plays a role in the signal transduction processes required for normal vascularization of the placenta. Involved in the immune response to infection by the bacteria S.aureus, S.typhimurium or S.enterica. Infection promotes itaconate production, leading to alkylation, resulting in nuclear localization and transcription factor activity. Itaconate-mediated alkylation activates TFEB-dependent lysosomal biogenesis, facilitating the bacteria clearance during the antibacterial innate immune response. In association with ACSS2, promotes the expression of genes involved in lysosome biogenesis and both autophagy upon glucose deprivation. This is Transcription factor EB from Mus musculus (Mouse).